We begin with the raw amino-acid sequence, 557 residues long: Phosphoribosylaminoimidazole carboxylase, chloroplastic (557 aa).

One can recognise an ATP-grasp domain in the interval lysine 108–valine 293. Tryptophan 132 to alanine 189 lines the ATP pocket. The tract at residues cysteine 387–serine 557 is AIR carboxylase catalytic subunit.

In the C-terminal section; belongs to the AIR carboxylase family. Class I subfamily.

The protein localises to the plastid. The protein resides in the chloroplast. The enzyme catalyses 5-amino-1-(5-phospho-D-ribosyl)imidazole-4-carboxylate + H(+) = 5-amino-1-(5-phospho-beta-D-ribosyl)imidazole + CO2. It participates in purine metabolism; IMP biosynthesis via de novo pathway; 5-amino-1-(5-phospho-D-ribosyl)imidazole-4-carboxylate from 5-amino-1-(5-phospho-D-ribosyl)imidazole (carboxylase route): step 1/1. The sequence is that of Phosphoribosylaminoimidazole carboxylase, chloroplastic (PURKE) from Vigna aconitifolia (Moth bean).